A 360-amino-acid chain; its full sequence is Mitogen-activated protein kinase 14 (360 aa).

N-acetylserine is present on Ser-2. Position 2 is a phosphoserine (Ser-2). A Phosphothreonine modification is found at Thr-16. In terms of domain architecture, Protein kinase spans Tyr-24–Phe-308. ATP-binding positions include Val-30–Val-38 and Lys-53. Lys-53 and Lys-152 each carry N6-acetyllysine. Asp-168 serves as the catalytic Proton acceptor. A Phosphothreonine; by MAP2K3, MAP2K4, MAP2K6 and autocatalysis modification is found at Thr-180. Positions Thr-180 to Tyr-182 match the TXY motif. Residue Tyr-182 is modified to Phosphotyrosine; by MAP2K3, MAP2K4, MAP2K6 and autocatalysis. Residue Thr-263 is modified to Phosphothreonine. Tyr-323 carries the phosphotyrosine; by ZAP70 modification.

Belongs to the protein kinase superfamily. CMGC Ser/Thr protein kinase family. MAP kinase subfamily. In terms of assembly, component of a signaling complex containing at least AKAP13, PKN1, MAPK14, ZAK and MAP2K3. Within this complex, AKAP13 interacts directly with PKN1, which in turn recruits MAPK14, MAP2K3 and ZAK. Binds to a kinase interaction motif within the protein tyrosine phosphatase, PTPRR. This interaction retains MAPK14 in the cytoplasm and prevents nuclear accumulation. Interacts with SPAG9 and GADD45A. Interacts with CDC25B, CDC25C, DUSP1, DUSP10, DUSP16, NP60, SUPT20H and TAB1. Interacts with casein kinase II subunits CSNK2A1 and CSNK2B. Interacts with PPM1D. Interacts with CDK5RAP3; recruits PPM1D to MAPK14 and may regulate its dephosphorylation. Interacts with DUSP2; this interaction does not lead to catalytic activation of DUSP2 and dephosphrylation of MAPK14. Requires Mg(2+) as cofactor. In terms of processing, dually phosphorylated on Thr-180 and Tyr-182 by the MAP2Ks MAP2K3/MKK3, MAP2K4/MKK4 and MAP2K6/MKK6 in response to inflammatory citokines, environmental stress or growth factors, which activates the enzyme. Dual phosphorylation can also be mediated by TAB1-mediated autophosphorylation. TCR engagement in T-cells also leads to Tyr-323 phosphorylation by ZAP70. Dephosphorylated and inactivated by DUPS1, DUSP10 and DUSP16. PPM1D also mediates dephosphorylation and inactivation of MAPK14. Post-translationally, acetylated at Lys-53 and Lys-152 by KAT2B and EP300. Acetylation at Lys-53 increases the affinity for ATP and enhances kinase activity. Lys-53 and Lys-152 are deacetylated by HDAC3. Ubiquitinated. Ubiquitination leads to degradation by the proteasome pathway. In terms of tissue distribution, brain, heart, placenta, pancreas and skeletal muscle. Expressed to a lesser extent in lung, liver and kidney.

It localises to the cytoplasm. It is found in the nucleus. It catalyses the reaction L-seryl-[protein] + ATP = O-phospho-L-seryl-[protein] + ADP + H(+). The catalysed reaction is L-threonyl-[protein] + ATP = O-phospho-L-threonyl-[protein] + ADP + H(+). With respect to regulation, activated by cell stresses such as DNA damage, heat shock, osmotic shock, anisomycin and sodium arsenite, as well as pro-inflammatory stimuli such as bacterial lipopolysaccharide (LPS) and interleukin-1. Activation occurs through dual phosphorylation of Thr-180 and Tyr-182 by either of two dual specificity kinases, MAP2K3/MKK3 or MAP2K6/MKK6, and potentially also MAP2K4/MKK4, as well as by TAB1-mediated autophosphorylation. MAPK14 phosphorylated on both Thr-180 and Tyr-182 is 10-20-fold more active than MAPK14 phosphorylated only on Thr-180, whereas MAPK14 phosphorylated on Tyr-182 alone is inactive. whereas Thr-180 is necessary for catalysis, Tyr-182 may be required for auto-activation and substrate recognition. Phosphorylated at Tyr-323 by ZAP70 in an alternative activation pathway in response to TCR signaling in T-cells. This alternative pathway is inhibited by GADD45A. Inhibited by dual specificity phosphatases, such as DUSP1, DUSP10, and DUSP16. Specifically inhibited by the binding of pyridinyl-imidazole compounds, which are cytokine-suppressive anti-inflammatory drugs (CSAID). Isoform Mxi2 is 100-fold less sensitive to these agents than the other isoforms and is not inhibited by DUSP1. Isoform Exip is not activated by MAP2K6. SB203580 is an inhibitor of MAPK14. In terms of biological role, serine/threonine kinase which acts as an essential component of the MAP kinase signal transduction pathway. MAPK14 is one of the four p38 MAPKs which play an important role in the cascades of cellular responses evoked by extracellular stimuli such as pro-inflammatory cytokines or physical stress leading to direct activation of transcription factors. Accordingly, p38 MAPKs phosphorylate a broad range of proteins and it has been estimated that they may have approximately 200 to 300 substrates each. Some of the targets are downstream kinases which are activated through phosphorylation and further phosphorylate additional targets. RPS6KA5/MSK1 and RPS6KA4/MSK2 can directly phosphorylate and activate transcription factors such as CREB1, ATF1, the NF-kappa-B isoform RELA/NFKB3, STAT1 and STAT3, but can also phosphorylate histone H3 and the nucleosomal protein HMGN1. RPS6KA5/MSK1 and RPS6KA4/MSK2 play important roles in the rapid induction of immediate-early genes in response to stress or mitogenic stimuli, either by inducing chromatin remodeling or by recruiting the transcription machinery. On the other hand, two other kinase targets, MAPKAPK2/MK2 and MAPKAPK3/MK3, participate in the control of gene expression mostly at the post-transcriptional level, by phosphorylating ZFP36 (tristetraprolin) and ELAVL1, and by regulating EEF2K, which is important for the elongation of mRNA during translation. MKNK1/MNK1 and MKNK2/MNK2, two other kinases activated by p38 MAPKs, regulate protein synthesis by phosphorylating the initiation factor EIF4E2. MAPK14 also interacts with casein kinase II, leading to its activation through autophosphorylation and further phosphorylation of TP53/p53. In the cytoplasm, the p38 MAPK pathway is an important regulator of protein turnover. For example, CFLAR is an inhibitor of TNF-induced apoptosis whose proteasome-mediated degradation is regulated by p38 MAPK phosphorylation. In a similar way, MAPK14 phosphorylates the ubiquitin ligase SIAH2, regulating its activity towards EGLN3. MAPK14 may also inhibit the lysosomal degradation pathway of autophagy by interfering with the intracellular trafficking of the transmembrane protein ATG9. Another function of MAPK14 is to regulate the endocytosis of membrane receptors by different mechanisms that impinge on the small GTPase RAB5A. In addition, clathrin-mediated EGFR internalization induced by inflammatory cytokines and UV irradiation depends on MAPK14-mediated phosphorylation of EGFR itself as well as of RAB5A effectors. Ectodomain shedding of transmembrane proteins is regulated by p38 MAPKs as well. In response to inflammatory stimuli, p38 MAPKs phosphorylate the membrane-associated metalloprotease ADAM17. Such phosphorylation is required for ADAM17-mediated ectodomain shedding of TGF-alpha family ligands, which results in the activation of EGFR signaling and cell proliferation. Another p38 MAPK substrate is FGFR1. FGFR1 can be translocated from the extracellular space into the cytosol and nucleus of target cells, and regulates processes such as rRNA synthesis and cell growth. FGFR1 translocation requires p38 MAPK activation. In the nucleus, many transcription factors are phosphorylated and activated by p38 MAPKs in response to different stimuli. Classical examples include ATF1, ATF2, ATF6, ELK1, PTPRH, DDIT3, TP53/p53 and MEF2C and MEF2A. The p38 MAPKs are emerging as important modulators of gene expression by regulating chromatin modifiers and remodelers. The promoters of several genes involved in the inflammatory response, such as IL6, IL8 and IL12B, display a p38 MAPK-dependent enrichment of histone H3 phosphorylation on 'Ser-10' (H3S10ph) in LPS-stimulated myeloid cells. This phosphorylation enhances the accessibility of the cryptic NF-kappa-B-binding sites marking promoters for increased NF-kappa-B recruitment. Phosphorylates CDC25B and CDC25C which is required for binding to 14-3-3 proteins and leads to initiation of a G2 delay after ultraviolet radiation. Phosphorylates TIAR following DNA damage, releasing TIAR from GADD45A mRNA and preventing mRNA degradation. The p38 MAPKs may also have kinase-independent roles, which are thought to be due to the binding to targets in the absence of phosphorylation. Protein O-Glc-N-acylation catalyzed by the OGT is regulated by MAPK14, and, although OGT does not seem to be phosphorylated by MAPK14, their interaction increases upon MAPK14 activation induced by glucose deprivation. This interaction may regulate OGT activity by recruiting it to specific targets such as neurofilament H, stimulating its O-Glc-N-acylation. Required in mid-fetal development for the growth of embryo-derived blood vessels in the labyrinth layer of the placenta. Also plays an essential role in developmental and stress-induced erythropoiesis, through regulation of EPO gene expression. Isoform MXI2 activation is stimulated by mitogens and oxidative stress and only poorly phosphorylates ELK1 and ATF2. Isoform EXIP may play a role in the early onset of apoptosis. Phosphorylates S100A9 at 'Thr-113'. Phosphorylates NLRP1 downstream of MAP3K20/ZAK in response to UV-B irradiation and ribosome collisions, promoting activation of the NLRP1 inflammasome and pyroptosis. Functionally, (Microbial infection) Activated by phosphorylation by M.tuberculosis EsxA in T-cells leading to inhibition of IFN-gamma production; phosphorylation is apparent within 15 minutes and is inhibited by kinase-specific inhibitors SB203580 and siRNA. The chain is Mitogen-activated protein kinase 14 from Homo sapiens (Human).